Reading from the N-terminus, the 891-residue chain is DNA mismatch repair protein MutS (891 aa).

ATP is bound at residue 646–653 (GPNMAGKS).

It belongs to the DNA mismatch repair MutS family.

Its function is as follows. This protein is involved in the repair of mismatches in DNA. It is possible that it carries out the mismatch recognition step. This protein has a weak ATPase activity. The polypeptide is DNA mismatch repair protein MutS (Rickettsia massiliae (strain Mtu5)).